A 79-amino-acid polypeptide reads, in one-letter code: Cell division protein ZapB (79 aa).

Positions 1 to 78 (MSLEALDQLQ…LNSLLGKMDD (78 aa)) form a coiled coil.

Belongs to the ZapB family. In terms of assembly, homodimer. The ends of the coiled-coil dimer bind to each other, forming polymers. Interacts with FtsZ.

The protein localises to the cytoplasm. Non-essential, abundant cell division factor that is required for proper Z-ring formation. It is recruited early to the divisome by direct interaction with FtsZ, stimulating Z-ring assembly and thereby promoting cell division earlier in the cell cycle. Its recruitment to the Z-ring requires functional FtsA or ZipA. The polypeptide is Cell division protein ZapB (Hamiltonella defensa subsp. Acyrthosiphon pisum (strain 5AT)).